The chain runs to 1026 residues: Multidrug resistance protein MdtC (1026 aa).

The next 11 membrane-spanning stretches (helical) occupy residues 15-35 (ILIA…LPVA), 333-353 (EVEE…FLFL), 360-380 (LIPA…MYLC), 387-407 (LSLM…IVVL), 431-451 (VGFT…PLLL), 463-483 (FAVT…TLTP), 528-548 (LVGV…IAIP), 853-873 (LILI…LYES), 897-917 (LFNA…IGIV), 953-973 (PIMM…LSGG), and 984-1004 (ITIV…TPVV).

Belongs to the resistance-nodulation-cell division (RND) (TC 2.A.6) family. MdtC subfamily. In terms of assembly, part of a tripartite efflux system composed of MdtA, MdtB and MdtC. MdtC forms a heteromultimer with MdtB.

The protein resides in the cell inner membrane. This Salmonella agona (strain SL483) protein is Multidrug resistance protein MdtC.